We begin with the raw amino-acid sequence, 180 residues long: Major urinary protein 2 (180 aa).

The first 18 residues, 1–18 (MKMLLLLCLGLTLVCVHA), serve as a signal peptide directing secretion. A disulfide bridge links Cys-82 with Cys-175.

It belongs to the calycin superfamily. Lipocalin family. As to expression, abundant in the urine of adult male mice but absent from that of females.

Its subcellular location is the secreted. Its function is as follows. Binds pheromones that are released from drying urine of males. These pheromones affect the sexual behavior of females. The chain is Major urinary protein 2 (Mup2) from Mus musculus (Mouse).